The sequence spans 418 residues: MMNRASLCRIAVLLCILHLSHLIDSTYAQSYLTEKDFLAPLYDDDAITLSDDDFDNARKLSTEMVNSQKKRRVLSHQKYYRGDIRGRAAWTSKLKSGVRRNGVTSVIKRWPNGRIPYVISSQYNERERAVLARAFQEYHSRTCIRFVPRTSFDQDYLYIGKIDGCYSDVGRAGGRQELSLDDGCLQYNTAIHELMHSVGFYHEHERWDRDQYITILWNNIDKDAYDQFGRVDLTESSYYGQAYDYYSVMHYDSLAFSKNGFETLVAKRPEMTAVIGSAIDFSPIDLLKINKLYNCPAPNTIDISQISGNGWQGGGMGPRAPLPQVNLPLPPPPPLPTNPAIAIVGECSDRTNLCWRWLDRCRSYFFEKIMKEFCALSCGYCVPTNAVSKAAPAIPLQPTLSIAEGPEGPMPPLYQRFG.

Positions 1 to 28 are cleaved as a signal peptide; that stretch reads MMNRASLCRIAVLLCILHLSHLIDSTYA. The propeptide occupies 29–100; the sequence is QSYLTEKDFL…TSKLKSGVRR (72 aa). The Peptidase M12A domain maps to 101–296; it reads NGVTSVIKRW…LKINKLYNCP (196 aa). 5 disulfides stabilise this stretch: C143-C295, C165-C184, C347-C381, C354-C374, and C361-C378. H192 contributes to the Zn(2+) binding site. E193 is an active-site residue. H196 and H202 together coordinate Zn(2+). Positions 347-381 constitute a ShKT domain; it reads CSDRTNLCWRWLDRCRSYFFEKIMKEFCALSCGYC.

It depends on Zn(2+) as a cofactor.

It is found in the secreted. The catalysed reaction is Hydrolysis of peptide bonds in substrates containing five or more amino acids, preferentially with Ala in P1', and Pro in P2'.. Inhibited by ethylene glycol-bis(2-aminoethylether)-N,N,N,N-tetraacetic acid (EGTA), ethylenediaminetetraacetic acid (EDTA) and o-phenanthroline. Functionally, metalloprotease. This is Zinc metalloproteinase nas-8 from Steinernema carpocapsae (Entomopathogenic nematode).